Here is a 171-residue protein sequence, read N- to C-terminus: MRHNKHRASLGVTVEHRRAMLSNLAAALITHGRIETTLVKAKALRPFVEKVITKAKQAAAKTDKKDALHLRRLAQSDVRDETAVTKLFNETYKEFANRNGGYTRIYKLGPQRIGDAAEMALIEFVKADDPGYKKSKGKKATKAKGKKAKATPAAEAAAAATTEAAPAEEKK.

Positions 130–171 (PGYKKSKGKKATKAKGKKAKATPAAEAAAAATTEAAPAEEKK) are disordered. The span at 133–149 (KKSKGKKATKAKGKKAK) shows a compositional bias: basic residues. Over residues 150-165 (ATPAAEAAAAATTEAA) the composition is skewed to low complexity.

It belongs to the bacterial ribosomal protein bL17 family. As to quaternary structure, part of the 50S ribosomal subunit. Contacts protein L32.

This chain is Large ribosomal subunit protein bL17, found in Opitutus terrae (strain DSM 11246 / JCM 15787 / PB90-1).